The chain runs to 219 residues: Transcriptional regulator AcuR (219 aa).

A disordered region spans residues Met1 to Ala25. Residues Ser26–Phe86 form the HTH tetR-type domain. Residues Gly49–Phe68 constitute a DNA-binding region (H-T-H motif).

Its function is as follows. A transcriptional repressor for its operon. Probably binds to 2 operator sequences in the promoter. In Cereibacter sphaeroides (strain ATCC 17023 / DSM 158 / JCM 6121 / CCUG 31486 / LMG 2827 / NBRC 12203 / NCIMB 8253 / ATH 2.4.1.) (Rhodobacter sphaeroides), this protein is Transcriptional regulator AcuR (acuR).